The chain runs to 186 residues: Peptidyl-tRNA hydrolase (186 aa).

Residue Tyr-14 coordinates tRNA. The active-site Proton acceptor is His-19. Tyr-64, Asn-66, and Asn-112 together coordinate tRNA.

This sequence belongs to the PTH family. In terms of assembly, monomer.

Its subcellular location is the cytoplasm. It carries out the reaction an N-acyl-L-alpha-aminoacyl-tRNA + H2O = an N-acyl-L-amino acid + a tRNA + H(+). In terms of biological role, hydrolyzes ribosome-free peptidyl-tRNAs (with 1 or more amino acids incorporated), which drop off the ribosome during protein synthesis, or as a result of ribosome stalling. Catalyzes the release of premature peptidyl moieties from peptidyl-tRNA molecules trapped in stalled 50S ribosomal subunits, and thus maintains levels of free tRNAs and 50S ribosomes. The polypeptide is Peptidyl-tRNA hydrolase (Mesoplasma florum (strain ATCC 33453 / NBRC 100688 / NCTC 11704 / L1) (Acholeplasma florum)).